The primary structure comprises 87 residues: Anaphase-promoting complex subunit 11 (87 aa).

The RING-type; atypical zinc finger occupies 35 to 77 (CVDCKIPGDDCPPVWGVCNHAFHMHCILKWLNANELQQCPMCR).

The protein belongs to the RING-box family. As to quaternary structure, the APC/C is composed of at least 13 subunits that stay tightly associated throughout the cell cycle: anapc1, anapc2, anapc3, anapc4, anapc5, anapc6, anapc7, anapc8, anapc10, anapc11, cdc20, cdc26 and cdh1.

It is found in the nucleus. It functions in the pathway protein modification; protein ubiquitination. Component of the anaphase promoting complex/cyclosome (APC/C), a cell cycle-regulated E3 ubiquitin-protein ligase complex that controls progression through mitosis and the G1 phase of the cell cycle. This chain is Anaphase-promoting complex subunit 11 (anapc11), found in Dictyostelium discoideum (Social amoeba).